Reading from the N-terminus, the 338-residue chain is Tetraacyldisaccharide 4'-kinase (338 aa).

51 to 58 lines the ATP pocket; sequence HLGGAGKT.

This sequence belongs to the LpxK family.

It carries out the reaction a lipid A disaccharide + ATP = a lipid IVA + ADP + H(+). The protein operates within glycolipid biosynthesis; lipid IV(A) biosynthesis; lipid IV(A) from (3R)-3-hydroxytetradecanoyl-[acyl-carrier-protein] and UDP-N-acetyl-alpha-D-glucosamine: step 6/6. In terms of biological role, transfers the gamma-phosphate of ATP to the 4'-position of a tetraacyldisaccharide 1-phosphate intermediate (termed DS-1-P) to form tetraacyldisaccharide 1,4'-bis-phosphate (lipid IVA). The sequence is that of Tetraacyldisaccharide 4'-kinase from Rhodopseudomonas palustris (strain BisB5).